A 72-amino-acid chain; its full sequence is Translation initiation factor IF-1 (72 aa).

The S1-like domain occupies 1-72 (MAKSDVIEVD…DKGRITYRYK (72 aa)).

The protein belongs to the IF-1 family. As to quaternary structure, component of the 30S ribosomal translation pre-initiation complex which assembles on the 30S ribosome in the order IF-2 and IF-3, IF-1 and N-formylmethionyl-tRNA(fMet); mRNA recruitment can occur at any time during PIC assembly.

Its subcellular location is the cytoplasm. One of the essential components for the initiation of protein synthesis. Stabilizes the binding of IF-2 and IF-3 on the 30S subunit to which N-formylmethionyl-tRNA(fMet) subsequently binds. Helps modulate mRNA selection, yielding the 30S pre-initiation complex (PIC). Upon addition of the 50S ribosomal subunit IF-1, IF-2 and IF-3 are released leaving the mature 70S translation initiation complex. In Sulfurimonas denitrificans (strain ATCC 33889 / DSM 1251) (Thiomicrospira denitrificans (strain ATCC 33889 / DSM 1251)), this protein is Translation initiation factor IF-1.